A 715-amino-acid polypeptide reads, in one-letter code: MSLDCTSHIALGAASPAPEETYDHLSEVPVTREQLNHYRNVAQNARSELAATLVKFECAQSELQDLRSKMLSKEVSCQELKAEMESYKENNARKSSLLTSLRDRVQELEEESAALSTSKIRTEITAHAAIKENQELKKKVVELNEKLQKCSKENEENKKQVSKNCRKHEEFLTQLRDCLDPDERNDKASDEDLILKLRDLRKENEFVKGQIVILEETINVHEMEAKASRETIMRLASEVNREQKKAASCTEEKEKLNQDLLSAVEAKEALEREVKIFQERLLAGQQVWDASKQEVSLLKKSSSELEKSLKASQDAVTTSQSQYFSFREKIAALLRGRLSMTGSTEDTILEKIREMDSREESRDRMVSQLEAQISELVEQLGKESGFHQKALQRAQKAENMLETLQGQLTHLEAELVSGGVLRDNLNFEKQKYLKFLDQLSQKMKLDQMAAELGFDMRLDVVLARTEQLVRLESNAVIENKTIAHNLQRKLKTQKERLESKELHMSLLRQKIAQLEEEKQARTALVVERDNAHLTIRNLQKKVERLQKELNTCRDLHTELKAKLADTNELKIKTLEQTKAIEDLNKSRDQLEKMKEKAEKKLMSVKSELDTTEHEAKENKERARNMIEVVTSEMKTLKKSLEEAEKREKQLADFREVVSQMLGLNVTSLALPDYEIIKCLERLVHSHQHHFVTCACLKDVTTGQERHPQGHLQLLH.

Coiled-coil stretches lie at residues 30-286 (VTRE…AGQQ), 360-418 (ESRD…LVSG), and 478-656 (ENKT…FREV). Positions 355–591 (MDSREESRDR…DLNKSRDQLE (237 aa)) are required for binding to microtubules and Golgi apparatus location.

As to quaternary structure, binds Golgi-associated microtubules.

The protein localises to the golgi apparatus. Its function is as follows. Plays a role in Golgi-associated microtubules organization and stabilization. This Homo sapiens (Human) protein is Coiled-coil domain-containing protein 170.